Consider the following 848-residue polypeptide: Translation initiation factor IF-2 (848 aa).

The segment at 1 to 20 (MNESKGAVDSGLMSGKTERT) is disordered. The tr-type G domain occupies 346 to 516 (PRAPVVTVMG…LLMAELLELK (171 aa)). The interval 355 to 362 (GHVDHGKT) is G1. 355 to 362 (GHVDHGKT) serves as a coordination point for GTP. The tract at residues 380 to 384 (GITQH) is G2. The interval 402-405 (DTPG) is G3. Residues 402 to 406 (DTPGH) and 456 to 459 (NKID) each bind GTP. The segment at 456 to 459 (NKID) is G4. Positions 492 to 494 (SAK) are G5.

Belongs to the TRAFAC class translation factor GTPase superfamily. Classic translation factor GTPase family. IF-2 subfamily.

The protein localises to the cytoplasm. One of the essential components for the initiation of protein synthesis. Protects formylmethionyl-tRNA from spontaneous hydrolysis and promotes its binding to the 30S ribosomal subunits. Also involved in the hydrolysis of GTP during the formation of the 70S ribosomal complex. This chain is Translation initiation factor IF-2, found in Ehrlichia canis (strain Jake).